A 274-amino-acid chain; its full sequence is Probable formate transporter (274 aa).

Helical transmembrane passes span 31–51 (IVLS…AEVV), 62–82 (AGLV…LVVI), 118–138 (VFNL…TGIL), 176–196 (AFWR…LAIA), 200–220 (IIGK…IGFE), 226–246 (MFFI…FFMN), and 248–268 (LIPV…CLYW).

Belongs to the FNT transporter (TC 1.A.16) family.

Its subcellular location is the cell membrane. Functionally, may act as a formate transporter. The polypeptide is Probable formate transporter (fdhC) (Methanothermobacter thermautotrophicus (Methanobacterium thermoformicicum)).